Here is a 278-residue protein sequence, read N- to C-terminus: Serine/arginine-rich splicing factor SR34B (278 aa).

Positions 7–82 (RTIYVGNLPG…HHLRVELAHG (76 aa)) constitute an RRM 1 domain. Over residues 81-91 (HGGRRSSHDAR) the composition is skewed to basic and acidic residues. Disordered regions lie at residues 81–121 (HGGR…SEYR) and 192–263 (EYDS…RSLS). The span at 95–107 (SGRGRGGRGGGDG) shows a compositional bias: gly residues. Basic and acidic residues-rich tracts occupy residues 108 to 120 (GGRE…RSEY) and 192 to 201 (EYDSRRDSRS). The region spanning 120–195 (YRVVVSGLPS…EYVRVREYDS (76 aa)) is the RRM 2 domain. Residues Ser-201, Ser-203, Ser-225, Ser-231, Ser-233, Ser-242, Ser-250, Ser-259, and Ser-263 each carry the phosphoserine modification. The span at 207 to 243 (SYSKSRSRGRSPSRSRSRSRSRSKSRSPKAKSLRRSP) shows a compositional bias: basic residues.

Belongs to the splicing factor SR family. SR subfamily. In terms of assembly, component of the spliceosome.

Its subcellular location is the nucleus speckle. The protein localises to the nucleus. It localises to the nucleoplasm. Probably involved in intron recognition and spliceosome assembly. This is Serine/arginine-rich splicing factor SR34B (SR34B) from Arabidopsis thaliana (Mouse-ear cress).